Here is a 65-residue protein sequence, read N- to C-terminus: Alpha-toxin Bs-Tx28 (65 aa).

Positions 3 to 65 (RDAYIADDKN…VPIRIPGKCR (63 aa)) constitute an LCN-type CS-alpha/beta domain. 4 disulfide bridges follow: cysteine 13–cysteine 64, cysteine 17–cysteine 37, cysteine 23–cysteine 47, and cysteine 27–cysteine 49. An Arginine amide modification is found at arginine 65.

It belongs to the long (4 C-C) scorpion toxin superfamily. Sodium channel inhibitor family. Alpha subfamily. In terms of tissue distribution, expressed by the venom gland.

It localises to the secreted. Alpha toxins bind voltage-independently at site-3 of sodium channels (Nav) and inhibit the inactivation of the activated channels, thereby blocking neuronal transmission. This toxin inhibits the inactivation of activated TTX-sensitive sodium channels (Nav). The chain is Alpha-toxin Bs-Tx28 from Hottentotta tamulus sindicus (Scorpion).